We begin with the raw amino-acid sequence, 95 residues long: Integration host factor subunit beta (95 aa).

Belongs to the bacterial histone-like protein family. Heterodimer of an alpha and a beta chain.

This protein is one of the two subunits of integration host factor, a specific DNA-binding protein that functions in genetic recombination as well as in transcriptional and translational control. This is Integration host factor subunit beta from Shewanella pealeana (strain ATCC 700345 / ANG-SQ1).